The following is a 364-amino-acid chain: Suberization-associated anionic peroxidase 1 (364 aa).

The signal sequence occupies residues 1–25; that stretch reads MGFRLSHLSLALSFVALALAGVAIY. Residue asparagine 36 is glycosylated (N-linked (GlcNAc...) asparagine). 2 disulfide bridges follow: cysteine 81–cysteine 160 and cysteine 112–cysteine 117. The active-site Proton acceptor is histidine 110. Residues aspartate 111, valine 114, glycine 116, and aspartate 118 each coordinate Ca(2+). Asparagine 127, asparagine 162, and asparagine 200 each carry an N-linked (GlcNAc...) asparagine glycan. Disulfide bonds link cysteine 167–cysteine 353 and cysteine 246–cysteine 265. Residue proline 209 coordinates substrate. Residues asparagine 214 and asparagine 226 are each glycosylated (N-linked (GlcNAc...) asparagine). Position 239 (histidine 239) interacts with heme b. Residue threonine 240 coordinates Ca(2+). The N-linked (GlcNAc...) asparagine glycan is linked to asparagine 264. Residues aspartate 278, threonine 280, and aspartate 285 each contribute to the Ca(2+) site.

It belongs to the peroxidase family. Classical plant (class III) peroxidase subfamily. It depends on Ca(2+) as a cofactor. Heme b serves as cofactor.

It is found in the secreted. It catalyses the reaction 2 a phenolic donor + H2O2 = 2 a phenolic radical donor + 2 H2O. In terms of biological role, removal of H(2)O(2), oxidation of toxic reductants, biosynthesis and degradation of lignin, suberization, auxin catabolism, response to environmental stresses such as wounding, pathogen attack and oxidative stress. These functions might be dependent on each isozyme/isoform in each plant tissue. Suggested to catalyze the deposition of the aromatic residues of suberin on the cell wall and thus play a role in cell-suberization. The sequence is that of Suberization-associated anionic peroxidase 1 (TAP1) from Solanum lycopersicum (Tomato).